We begin with the raw amino-acid sequence, 523 residues long: Galactarate dehydratase (L-threo-forming) (523 aa).

Belongs to the UxaA family. As to quaternary structure, homodimer. Fe(2+) serves as cofactor.

The enzyme catalyses galactarate = 5-dehydro-4-deoxy-D-glucarate + H2O. Its pathway is carbohydrate acid metabolism; galactarate degradation; D-glycerate from galactarate: step 1/3. Functionally, catalyzes the dehydration of galactarate to form 5-dehydro-4-deoxy-D-glucarate (5-KDG). The chain is Galactarate dehydratase (L-threo-forming) from Escherichia coli (strain K12).